The primary structure comprises 341 residues: Ubiquinone biosynthesis protein COQ4, mitochondrial (341 aa).

Residues 1–16 constitute a mitochondrion transit peptide; that stretch reads MLSRISSVRIGTQVRQ. Zn(2+)-binding residues include His-220, Asp-221, His-224, and Glu-236.

Belongs to the COQ4 family. In terms of assembly, component of a multi-subunit COQ enzyme complex, composed of at least COQ3, COQ4, COQ5, COQ6, COQ7 and COQ9. Zn(2+) serves as cofactor.

It is found in the mitochondrion inner membrane. The enzyme catalyses a 4-hydroxy-3-methoxy-5-(all-trans-polyprenyl)benzoate + H(+) = a 2-methoxy-6-(all-trans-polyprenyl)phenol + CO2. It participates in cofactor biosynthesis; ubiquinone biosynthesis. Functionally, lyase that catalyzes the C1-decarboxylation of 4-hydroxy-3-methoxy-5-(all-trans-polyprenyl)benzoic acid into 2-methoxy-6-(all-trans-polyprenyl)phenol during ubiquinone biosynthesis. In Vanderwaltozyma polyspora (strain ATCC 22028 / DSM 70294 / BCRC 21397 / CBS 2163 / NBRC 10782 / NRRL Y-8283 / UCD 57-17) (Kluyveromyces polysporus), this protein is Ubiquinone biosynthesis protein COQ4, mitochondrial.